The following is a 308-amino-acid chain: Bifunctional protein FolD (308 aa).

170–172 (GKG) provides a ligand contact to NADP(+).

This sequence belongs to the tetrahydrofolate dehydrogenase/cyclohydrolase family. Homodimer.

The catalysed reaction is (6R)-5,10-methylene-5,6,7,8-tetrahydrofolate + NADP(+) = (6R)-5,10-methenyltetrahydrofolate + NADPH. It catalyses the reaction (6R)-5,10-methenyltetrahydrofolate + H2O = (6R)-10-formyltetrahydrofolate + H(+). Its pathway is one-carbon metabolism; tetrahydrofolate interconversion. Its function is as follows. Catalyzes the oxidation of 5,10-methylenetetrahydrofolate to 5,10-methenyltetrahydrofolate and then the hydrolysis of 5,10-methenyltetrahydrofolate to 10-formyltetrahydrofolate. The chain is Bifunctional protein FolD from Pyrobaculum calidifontis (strain DSM 21063 / JCM 11548 / VA1).